Reading from the N-terminus, the 404-residue chain is Phosphopentomutase (404 aa).

Mn(2+) is bound by residues Asp10, Asp303, His308, Asp344, His345, and His356.

It belongs to the phosphopentomutase family. The cofactor is Mn(2+).

It localises to the cytoplasm. It catalyses the reaction 2-deoxy-alpha-D-ribose 1-phosphate = 2-deoxy-D-ribose 5-phosphate. It carries out the reaction alpha-D-ribose 1-phosphate = D-ribose 5-phosphate. Its pathway is carbohydrate degradation; 2-deoxy-D-ribose 1-phosphate degradation; D-glyceraldehyde 3-phosphate and acetaldehyde from 2-deoxy-alpha-D-ribose 1-phosphate: step 1/2. Its function is as follows. Isomerase that catalyzes the conversion of deoxy-ribose 1-phosphate (dRib-1-P) and ribose 1-phosphate (Rib-1-P) to deoxy-ribose 5-phosphate (dRib-5-P) and ribose 5-phosphate (Rib-5-P), respectively. The polypeptide is Phosphopentomutase (Shewanella sp. (strain MR-7)).